A 413-amino-acid polypeptide reads, in one-letter code: Interferon-inducible GTPase 1 (413 aa).

Residue glycine 2 is the site of N-myristoyl glycine attachment. Residues 68–250 (SVLNVAVTGE…PVLMDKLISD (183 aa)) form the IRG-type G domain. GDP contacts are provided by glycine 79, glycine 81, lysine 82, serine 83, serine 84, threonine 102, and glycine 103. Threonine 102 carries the post-translational modification (Microbial infection) Phosphothreonine; by ROP18. Threonine 108 is modified ((Microbial infection) Phosphothreonine; by ROP18). Positions 184, 186, 187, and 232 each coordinate GDP. Cysteine 236 and cysteine 410 form a disulfide bridge.

It belongs to the TRAFAC class dynamin-like GTPase superfamily. IRG family. As to quaternary structure, monomer, as apoenzyme and in the GDP-bound form. Homooligomer, upon GTP binding. Interacts with HOOK3. (Microbial infection) Interacts with Toxoplasma gondii GRA7 in GTP-dependent manner; the interaction results in faster turnover of the GTP-activated IIGP1 oligomer. Interacts with T.gondii ROP5; the interaction results in inhibition of IRGA6/IIGP1 GTPase activity and oligomerization. In terms of processing, myristoylated. (Microbial infection) Phosphorylated by Toxoplasma gondii ROP18 from virulent strains.

Its subcellular location is the cytoplasm. It localises to the nucleus membrane. It is found in the endoplasmic reticulum membrane. The protein localises to the golgi apparatus. The protein resides in the golgi stack membrane. Its subcellular location is the parasitophorous vacuole membrane. It catalyses the reaction GTP + H2O = GDP + phosphate + H(+). GTPase with low activity. Has higher affinity for GDP than for GTP. Plays a role in resistance to intracellular pathogens. During infection with avirulent Toxoplasma gondii strains, recruited to the parasitophorous vacuole membrane. Required for disruption of the parasitophorous vacuole formed following T.gondii infection and subsequent killing of the parasite. Mediates resistance to Chlamydia trachomatis infection by targeting bacterial inclusions to autophagosomes for subsequent lysosomal destruction. The polypeptide is Interferon-inducible GTPase 1 (Iigp1) (Mus musculus (Mouse)).